A 247-amino-acid chain; its full sequence is C-type lectin domain family 7 member A (247 aa).

Residues 1 to 44 (MEYHPDLENLDEDGYTQLHFDSRSNTRIAVVSEKGSCVASPPWR) lie on the Cytoplasmic side of the membrane. The ITAM-like motif lies at 15-18 (YTQL). A helical; Signal-anchor for type II membrane protein membrane pass occupies residues 45-65 (LIAVILGILCLVILVIAVVLG). The Extracellular segment spans residues 66–247 (TMAIWRPNSG…CSICEKKFSM (182 aa)). The interval 81–105 (NGYFPSRNKENHSQPTQSPLEESVT) is disordered. An N-linked (GlcNAc...) asparagine glycan is attached at Asn-91. Residues 93–105 (SQPTQSPLEESVT) are compositionally biased toward polar residues. Disulfide bonds link Cys-120–Cys-131, Cys-148–Cys-241, and Cys-220–Cys-233. The C-type lectin domain maps to 127-242 (YEKSCYLFSP…CSVPSCSICE (116 aa)). Residue 146 to 153 (RQCSQLGS) coordinates (1,3-beta-D-glucosyl)n. Residues Lys-157, Asp-159, and Glu-163 each contribute to the a divalent metal cation site. Glu-195 is a (1,3-beta-D-glucosyl)n binding site. Glu-242 provides a ligand contact to a divalent metal cation.

In terms of assembly, homodimer. Interacts with SYK; participates in leukocyte activation in presence of fungal pathogens. Interacts with CD37; this interaction controls CLEC7A-mediated IL-6 production. Post-translationally, phosphorylated on tyrosine residues in response to beta-glucan binding. Detected in dendritic cells, in paracortical and medullary regions of lymph nodes, and in spleen red pulp and white pulp.

It is found in the cell membrane. Its function is as follows. Lectin that functions as a pattern recognizing receptor (PRR) specific for beta-1,3-linked and beta-1,6-linked glucans, which constitute cell wall constituents from pathogenic bacteria and fungi. Necessary for the TLR2-mediated inflammatory response and activation of NF-kappa-B: upon beta-glucan binding, recruits SYK via its ITAM motif and promotes a signaling cascade that activates some CARD domain-BCL10-MALT1 (CBM) signalosomes, leading to the activation of NF-kappa-B and MAP kinase p38 (MAPK11, MAPK12, MAPK13 and/or MAPK14) pathways which stimulate expression of genes encoding pro-inflammatory cytokines and chemokines. Enhances cytokine production in macrophages and dendritic cells. Mediates production of reactive oxygen species in the cell. Mediates phagocytosis of C.albicans conidia. Binds T-cells in a way that does not involve their surface glycans and plays a role in T-cell activation. Stimulates T-cell proliferation. Induces phosphorylation of SCIMP after binding beta-glucans. The protein is C-type lectin domain family 7 member A (CLEC7A) of Macaca mulatta (Rhesus macaque).